The following is a 206-amino-acid chain: Large ribosomal subunit protein uL3 (206 aa).

The disordered stretch occupies residues 126–155 (HGHAGGPGAHGSRFHRHPGSMGANSTPSRV).

It belongs to the universal ribosomal protein uL3 family. Part of the 50S ribosomal subunit. Forms a cluster with proteins L14 and L19.

One of the primary rRNA binding proteins, it binds directly near the 3'-end of the 23S rRNA, where it nucleates assembly of the 50S subunit. This is Large ribosomal subunit protein uL3 from Leptospira interrogans serogroup Icterohaemorrhagiae serovar copenhageni (strain Fiocruz L1-130).